We begin with the raw amino-acid sequence, 445 residues long: Phosphoglucosamine mutase (445 aa).

Catalysis depends on Ser102, which acts as the Phosphoserine intermediate. Mg(2+)-binding residues include Ser102, Asp241, Asp243, and Asp245. The residue at position 102 (Ser102) is a Phosphoserine.

It belongs to the phosphohexose mutase family. The cofactor is Mg(2+). In terms of processing, activated by phosphorylation.

It carries out the reaction alpha-D-glucosamine 1-phosphate = D-glucosamine 6-phosphate. In terms of biological role, catalyzes the conversion of glucosamine-6-phosphate to glucosamine-1-phosphate. The sequence is that of Phosphoglucosamine mutase from Shewanella denitrificans (strain OS217 / ATCC BAA-1090 / DSM 15013).